A 940-amino-acid chain; its full sequence is Chromatin assembly factor 1 subunit FSM (940 aa).

Disordered stretches follow at residues 317–473 (NVDD…DPCT), 638–682 (VDSD…FFVP), and 919–940 (KTTQNVNGDTDIPRINLLPSSQ). The span at 320-329 (DSQLQKNTST) shows a compositional bias: polar residues. Positions 329–439 (TNEKDTQKAQ…LKKQLAIQKQ (111 aa)) form a coiled coil. Residues 330–429 (NEKDTQKAQK…QKRREKEAVQ (100 aa)) show a composition bias toward basic and acidic residues. Residues 430–440 (LKKQLAIQKQA) are compositionally biased toward low complexity. Residues 445 to 461 (RFFKNKKDSEKLEKPGG) are compositionally biased toward basic and acidic residues. Over residues 638 to 650 (VDSDDEWEEEDPG) the composition is skewed to acidic residues.

Belongs to the CHAF1A family. As to quaternary structure, component of the chromatin assembly factor 1 (CAF-1) complex, composed of FSM (FAS1), FAS2 and MSI1. In embryo, expressed in leaf primordia, coleoptile and radicle. In seedlings, expressed in cell division zone of roots, SAM and leaf primordia. Expressed in floral organ primordia.

The protein localises to the nucleus. Component of the chromatin assembly factor complex (CAF-1) involved in chromatin assembly following DNA replication and DNA repair. Required for several aspects of development, including apical meristem maintenance by regulating the durations of the S- and G2-phases of the cell cycle through its chromatin assembly activity. The sequence is that of Chromatin assembly factor 1 subunit FSM (FSM) from Oryza sativa subsp. japonica (Rice).